Reading from the N-terminus, the 578-residue chain is Proline--tRNA ligase (578 aa).

This sequence belongs to the class-II aminoacyl-tRNA synthetase family. ProS type 1 subfamily. In terms of assembly, homodimer.

It localises to the cytoplasm. The catalysed reaction is tRNA(Pro) + L-proline + ATP = L-prolyl-tRNA(Pro) + AMP + diphosphate. Catalyzes the attachment of proline to tRNA(Pro) in a two-step reaction: proline is first activated by ATP to form Pro-AMP and then transferred to the acceptor end of tRNA(Pro). As ProRS can inadvertently accommodate and process non-cognate amino acids such as alanine and cysteine, to avoid such errors it has two additional distinct editing activities against alanine. One activity is designated as 'pretransfer' editing and involves the tRNA(Pro)-independent hydrolysis of activated Ala-AMP. The other activity is designated 'posttransfer' editing and involves deacylation of mischarged Ala-tRNA(Pro). The misacylated Cys-tRNA(Pro) is not edited by ProRS. The chain is Proline--tRNA ligase from Burkholderia ambifaria (strain ATCC BAA-244 / DSM 16087 / CCUG 44356 / LMG 19182 / AMMD) (Burkholderia cepacia (strain AMMD)).